A 100-amino-acid chain; its full sequence is Nucleoid-associated protein MYPU_0500 (100 aa).

It belongs to the YbaB/EbfC family. Homodimer.

The protein resides in the cytoplasm. The protein localises to the nucleoid. Functionally, binds to DNA and alters its conformation. May be involved in regulation of gene expression, nucleoid organization and DNA protection. This chain is Nucleoid-associated protein MYPU_0500, found in Mycoplasmopsis pulmonis (strain UAB CTIP) (Mycoplasma pulmonis).